The following is a 305-amino-acid chain: Beta-lactamase (305 aa).

Residues 1–34 constitute a signal peptide (tat-type signal); that stretch reads MGTTGARPSRRAVLTAAAGAAVAGIPLGGSTAFA. The Acyl-ester intermediate role is filled by S82. 250-252 is a substrate binding site; that stretch reads KTG.

This sequence belongs to the class-A beta-lactamase family. In terms of processing, predicted to be exported by the Tat system. The position of the signal peptide cleavage has not been experimentally proven.

It carries out the reaction a beta-lactam + H2O = a substituted beta-amino acid. This is Beta-lactamase from Streptomyces lavendulae.